The primary structure comprises 181 residues: Cytochrome c oxidase subunit 2 (181 aa).

Cys126, Glu128, Cys130, His134, and Met137 together coordinate Cu cation. Residue Glu128 coordinates Mg(2+).

This sequence belongs to the cytochrome c oxidase subunit 2 family. As to quaternary structure, component of the cytochrome c oxidase (complex IV, CIV), a multisubunit enzyme composed of a catalytic core of 3 subunits and several supernumerary subunits. The complex exists as a monomer or a dimer and forms supercomplexes (SCs) in the inner mitochondrial membrane with ubiquinol-cytochrome c oxidoreductase (cytochrome b-c1 complex, complex III, CIII). Cu cation serves as cofactor.

It is found in the mitochondrion inner membrane. The enzyme catalyses 4 Fe(II)-[cytochrome c] + O2 + 8 H(+)(in) = 4 Fe(III)-[cytochrome c] + 2 H2O + 4 H(+)(out). Its function is as follows. Component of the cytochrome c oxidase, the last enzyme in the mitochondrial electron transport chain which drives oxidative phosphorylation. The respiratory chain contains 3 multisubunit complexes succinate dehydrogenase (complex II, CII), ubiquinol-cytochrome c oxidoreductase (cytochrome b-c1 complex, complex III, CIII) and cytochrome c oxidase (complex IV, CIV), that cooperate to transfer electrons derived from NADH and succinate to molecular oxygen, creating an electrochemical gradient over the inner membrane that drives transmembrane transport and the ATP synthase. Cytochrome c oxidase is the component of the respiratory chain that catalyzes the reduction of oxygen to water. Electrons originating from reduced cytochrome c in the intermembrane space (IMS) are transferred via the dinuclear copper A center (CU(A)) of subunit 2 and heme A of subunit 1 to the active site in subunit 1, a binuclear center (BNC) formed by heme A3 and copper B (CU(B)). The BNC reduces molecular oxygen to 2 water molecules using 4 electrons from cytochrome c in the IMS and 4 protons from the mitochondrial matrix. The polypeptide is Cytochrome c oxidase subunit 2 (COII) (Paramecium primaurelia).